The following is a 137-amino-acid chain: Putative pre-16S rRNA nuclease (137 aa).

It belongs to the YqgF nuclease family.

The protein localises to the cytoplasm. In terms of biological role, could be a nuclease involved in processing of the 5'-end of pre-16S rRNA. The sequence is that of Putative pre-16S rRNA nuclease from Clostridium botulinum (strain 657 / Type Ba4).